The chain runs to 192 residues: Cytidylate kinase (192 aa).

12–20 is a binding site for ATP; the sequence is GLAGSGTTT.

The protein belongs to the cytidylate kinase family. Type 2 subfamily.

Its subcellular location is the cytoplasm. The catalysed reaction is CMP + ATP = CDP + ADP. It catalyses the reaction dCMP + ATP = dCDP + ADP. The protein is Cytidylate kinase of Pyrococcus furiosus (strain ATCC 43587 / DSM 3638 / JCM 8422 / Vc1).